Here is a 571-residue protein sequence, read N- to C-terminus: Putative phospholipase B-like 1 (571 aa).

The first 18 residues, 1–18, serve as a signal peptide directing secretion; sequence MNWIFIFLAAAVAIGCEA. N-linked (GlcNAc...) asparagine glycosylation is found at Asn62, Asn149, Asn442, and Asn473.

The protein belongs to the phospholipase B-like family.

Its subcellular location is the lysosome. Its function is as follows. Putative phospholipase. The chain is Putative phospholipase B-like 1 from Caenorhabditis elegans.